Here is a 401-residue protein sequence, read N- to C-terminus: O-antigen ligase (401 aa).

At methionine 1–histidine 20 the chain is on the cytoplasmic side. The helical transmembrane segment at tryptophan 21 to valine 37 threads the bilayer. Residues glycine 38–aspartate 42 are Periplasmic-facing. Residues tyrosine 43–leucine 61 traverse the membrane as a helical segment. Residues glutamine 62–serine 72 lie on the Cytoplasmic side of the membrane. The helical transmembrane segment at proline 73–serine 92 threads the bilayer. Residues threonine 93 to lysine 103 lie on the Periplasmic side of the membrane. Residues arginine 104–alanine 122 form a helical membrane-spanning segment. At proline 123–alanine 129 the chain is on the cytoplasmic side. A helical membrane pass occupies residues threonine 130–tryptophan 150. Residues aspartate 151 to glycine 161 lie on the Periplasmic side of the membrane. A helical membrane pass occupies residues alanine 162 to tyrosine 183. Over tryptophan 184–proline 189 the chain is Cytoplasmic. Residues isoleucine 190–alanine 208 form a helical membrane-spanning segment. Residues threonine 209–arginine 212 lie on the Periplasmic side of the membrane. The helical transmembrane segment at threonine 213–glycine 229 threads the bilayer. The Cytoplasmic portion of the chain corresponds to aspartate 230–alanine 234. Residues leucine 235 to tyrosine 252 traverse the membrane as a helical segment. Residues proline 253–glutamate 306 lie on the Periplasmic side of the membrane. Residues glutamine 258–leucine 319 form a WZY-C region. Residues leucine 307–phenylalanine 331 form a helical membrane-spanning segment. Residues serine 332–proline 339 are Cytoplasmic-facing. A helical membrane pass occupies residues alanine 340–threonine 357. At glutamate 358–glutamate 368 the chain is on the periplasmic side. Residues histidine 369–isoleucine 385 traverse the membrane as a helical segment. The Cytoplasmic segment spans residues glutamine 386–proline 401.

This sequence belongs to the O-antigen ligase family. Homodimer.

It is found in the cell inner membrane. The enzyme catalyses a lipid-linked O antigen + a lipid A-core oligosaccharide = a lipopolysaccharide + a polyisoprenyl diphosphate.. Its pathway is bacterial outer membrane biogenesis; lipopolysaccharide biosynthesis. Activity does not require ATP and magnesium ions. In terms of biological role, transferase involved in the biosynthesis of the lipopolysaccharide (LPS). Catalyzes the transfer of a polymerized O-antigen molecule from its polyprenyl diphosphate membrane anchor to a terminal sugar of the lipid A-core oligosaccharide, finalizing the biosynthesis of the lipopolysaccharide. Required for the attachment of both A-band and B-band O-antigens, two forms of O-antigen produced by P.aeruginosa, onto the lipid A-core receptors. Important for cell wall integrity and motility of the bacteria. In Pseudomonas aeruginosa (strain ATCC 15692 / DSM 22644 / CIP 104116 / JCM 14847 / LMG 12228 / 1C / PRS 101 / PAO1), this protein is O-antigen ligase.